The chain runs to 175 residues: Pycsar effector protein RsPycTM (175 aa).

3 consecutive transmembrane segments (helical) span residues Ala-17 to Leu-37, Pro-44 to Ile-64, and Ala-146 to Ile-166.

The protein localises to the cell inner membrane. Pycsar (pyrimidine cyclase system for antiphage resistance) provides immunity against bacteriophage. The pyrimidine cyclase (PycC) synthesizes cyclic nucleotides in response to infection; these serve as specific second messenger signals. The signals activate the nearby effector, leading to bacterial cell death and abortive phage infection. A clade A Pycsar system. In terms of biological role, the effector gene of a two-gene Pycsar system. Expression of this and uridylate cyclase RsPycC (AC A0A4R2TZQ0) probably confers resistance to bacteriophage. The genes are probably only expressed in response to bacteriophage infection. Probably only responds to cUMP (produced by its cognate NTP cyclase), acts by impairing membrane integrity. The sequence is that of Pycsar effector protein RsPycTM from Rhizobium sp. (strain PP-F2F-G36).